The sequence spans 479 residues: Anaerobic nitric oxide reductase flavorubredoxin (479 aa).

The interval 30 to 210 (LRGSSYNSYL…PFSRLVTPKI (181 aa)) is zinc metallo-hydrolase. 6 residues coordinate Fe cation: histidine 79, glutamate 81, aspartate 83, histidine 147, aspartate 166, and histidine 227. Residues 254-393 (ITIFYDTMSN…LCREHGREIA (140 aa)) enclose the Flavodoxin-like domain. FMN-binding positions include 260-264 (TMSNN) and 342-369 (AFGS…EMSL). The 52-residue stretch at 423-474 (GPRMQCSVCQWIYDPAKGEPMQDVAPGTPWSEVPDNFLCPECSLGKDVFDEL) folds into the Rubredoxin-like domain. Positions 428, 431, 461, and 464 each coordinate Fe cation.

In the N-terminal section; belongs to the zinc metallo-hydrolase group 3 family. In terms of assembly, homotetramer. Requires Fe cation as cofactor. It depends on FMN as a cofactor.

The protein localises to the cytoplasm. It functions in the pathway nitrogen metabolism; nitric oxide reduction. Its function is as follows. Anaerobic nitric oxide reductase; uses NADH to detoxify nitric oxide (NO), protecting several 4Fe-4S NO-sensitive enzymes. Has at least 2 reductase partners, only one of which (NorW, flavorubredoxin reductase) has been identified. NO probably binds to the di-iron center; electrons enter from the NorW at rubredoxin and are transferred sequentially to the FMN center and the di-iron center. Also able to function as an aerobic oxygen reductase. The protein is Anaerobic nitric oxide reductase flavorubredoxin of Escherichia coli (strain SMS-3-5 / SECEC).